The sequence spans 373 residues: Glutamate 5-kinase (373 aa).

Lys15 serves as a coordination point for ATP. Substrate is bound by residues Ser54, Asp141, and Asn153. ATP-binding positions include 173 to 174 (SD) and 215 to 221 (TGGMATK). In terms of domain architecture, PUA spans 280–358 (RGKLLVDEGA…SEIEVVLGYK (79 aa)).

It belongs to the glutamate 5-kinase family.

Its subcellular location is the cytoplasm. It carries out the reaction L-glutamate + ATP = L-glutamyl 5-phosphate + ADP. Its pathway is amino-acid biosynthesis; L-proline biosynthesis; L-glutamate 5-semialdehyde from L-glutamate: step 1/2. In terms of biological role, catalyzes the transfer of a phosphate group to glutamate to form L-glutamate 5-phosphate. The protein is Glutamate 5-kinase of Syntrophotalea carbinolica (strain DSM 2380 / NBRC 103641 / GraBd1) (Pelobacter carbinolicus).